Consider the following 338-residue polypeptide: Lipoate-protein ligase A (338 aa).

In terms of domain architecture, BPL/LPL catalytic spans 29 to 216 (PATQRVLFLW…AFFAHYGERV (188 aa)). Residues arginine 71, 76-79 (GAVF), and lysine 134 contribute to the ATP site. Lysine 134 is a binding site for (R)-lipoate.

This sequence belongs to the LplA family. In terms of assembly, monomer.

It localises to the cytoplasm. The enzyme catalyses L-lysyl-[lipoyl-carrier protein] + (R)-lipoate + ATP = N(6)-[(R)-lipoyl]-L-lysyl-[lipoyl-carrier protein] + AMP + diphosphate + H(+). It participates in protein modification; protein lipoylation via exogenous pathway; protein N(6)-(lipoyl)lysine from lipoate: step 1/2. Its pathway is protein modification; protein lipoylation via exogenous pathway; protein N(6)-(lipoyl)lysine from lipoate: step 2/2. Its function is as follows. Catalyzes both the ATP-dependent activation of exogenously supplied lipoate to lipoyl-AMP and the transfer of the activated lipoyl onto the lipoyl domains of lipoate-dependent enzymes. The chain is Lipoate-protein ligase A from Salmonella paratyphi C (strain RKS4594).